A 227-amino-acid polypeptide reads, in one-letter code: Probable GTP-binding protein EngB (227 aa).

Residues 30–219 (KKPQIIVVGR…MVKINKNVNE (190 aa)) form the EngB-type G domain. GTP is bound by residues 38–45 (GRSNVGKS), 63–67 (GVTLK), 80–83 (DLPG), 160–163 (NKMD), and 197–199 (IGI). Mg(2+)-binding residues include Ser45 and Thr65.

This sequence belongs to the TRAFAC class TrmE-Era-EngA-EngB-Septin-like GTPase superfamily. EngB GTPase family. Requires Mg(2+) as cofactor.

In terms of biological role, necessary for normal cell division and for the maintenance of normal septation. This is Probable GTP-binding protein EngB from Methanococcus aeolicus (strain ATCC BAA-1280 / DSM 17508 / OCM 812 / Nankai-3).